Reading from the N-terminus, the 817-residue chain is Probable beta-glucosidase G (817 aa).

A signal peptide spans 1–20 (MANIAHLIVSGLLAATVAHG). N-linked (GlcNAc...) asparagine glycosylation is found at Asn40, Asn58, Asn229, and Asn276. Residue Asp304 is part of the active site. N-linked (GlcNAc...) asparagine glycans are attached at residues Asn343, Asn350, Asn402, Asn507, Asn563, Asn584, Asn623, Asn662, Asn679, and Asn715.

This sequence belongs to the glycosyl hydrolase 3 family.

The protein resides in the secreted. The enzyme catalyses Hydrolysis of terminal, non-reducing beta-D-glucosyl residues with release of beta-D-glucose.. It functions in the pathway glycan metabolism; cellulose degradation. Its function is as follows. Beta-glucosidases are one of a number of cellulolytic enzymes involved in the degradation of cellulosic biomass. Catalyzes the last step releasing glucose from the inhibitory cellobiose. The sequence is that of Probable beta-glucosidase G (bglG) from Aspergillus terreus (strain NIH 2624 / FGSC A1156).